The sequence spans 451 residues: UPF0210 protein lmo0534 (451 aa).

This sequence belongs to the UPF0210 family. As to quaternary structure, homodimer.

This is UPF0210 protein lmo0534 from Listeria monocytogenes serovar 1/2a (strain ATCC BAA-679 / EGD-e).